The sequence spans 431 residues: Protein farnesyltransferase subunit beta (431 aa).

PFTB repeat units follow at residues 130-171 (KRKI…SLCD), 182-224 (RKGI…TLLN), 231-273 (TEGV…AILR), 280-322 (VEKL…AILE), and 332-375 (KHAL…AVAE). Residues 258 to 261 (HGGY) and 301 to 304 (RSNK) each bind (2E,6E)-farnesyl diphosphate. The Zn(2+) site is built by Asp307 and Cys309. 310-313 (YSFW) contacts (2E,6E)-farnesyl diphosphate. Position 363 (His363) interacts with Zn(2+).

The protein belongs to the protein prenyltransferase subunit beta family. As to quaternary structure, heterodimer of an alpha (RAM2) and a beta (RAM1) subunit. It depends on Zn(2+) as a cofactor.

The protein localises to the cytoplasm. The enzyme catalyses L-cysteinyl-[protein] + (2E,6E)-farnesyl diphosphate = S-(2E,6E)-farnesyl-L-cysteinyl-[protein] + diphosphate. Catalyzes the transfer of a farnesyl moiety from farnesyl diphosphate to a cysteine at the fourth position from the C-terminus of several proteins having the C-terminal sequence Cys-aliphatic-aliphatic-X where X is Ser, Ala, Met, Cys, or Gln. Required for the membrane localization of proteins such as a-factor, Ras proteins and other membrane proteins containing the C-terminal CAAX motif. The beta subunit is responsible for isoprenoid and peptide-binding. The chain is Protein farnesyltransferase subunit beta from Saccharomyces cerevisiae (strain ATCC 204508 / S288c) (Baker's yeast).